Here is a 229-residue protein sequence, read N- to C-terminus: Putative ankyrin repeat protein L148 (229 aa).

ANK repeat units follow at residues 70-95 (ILDY…PDNY), 96-126 (IGTE…DLRI), 127-156 (NNDY…NCQA), and 157-186 (YNNA…SVAA).

The chain is Putative ankyrin repeat protein L148 from Acanthamoeba polyphaga (Amoeba).